The primary structure comprises 169 residues: S-ribosylhomocysteine lyase (169 aa).

Fe cation-binding residues include H54, H58, and C128.

It belongs to the LuxS family. As to quaternary structure, homodimer. The cofactor is Fe cation.

It carries out the reaction S-(5-deoxy-D-ribos-5-yl)-L-homocysteine = (S)-4,5-dihydroxypentane-2,3-dione + L-homocysteine. Functionally, involved in the synthesis of autoinducer 2 (AI-2) which is secreted by bacteria and is used to communicate both the cell density and the metabolic potential of the environment. The regulation of gene expression in response to changes in cell density is called quorum sensing. Catalyzes the transformation of S-ribosylhomocysteine (RHC) to homocysteine (HC) and 4,5-dihydroxy-2,3-pentadione (DPD). This Shewanella oneidensis (strain ATCC 700550 / JCM 31522 / CIP 106686 / LMG 19005 / NCIMB 14063 / MR-1) protein is S-ribosylhomocysteine lyase.